A 156-amino-acid polypeptide reads, in one-letter code: Small ribosomal subunit protein uS7c (156 aa).

This sequence belongs to the universal ribosomal protein uS7 family. Part of the 30S ribosomal subunit.

It localises to the plastid. The protein resides in the chloroplast. Functionally, one of the primary rRNA binding proteins, it binds directly to 16S rRNA where it nucleates assembly of the head domain of the 30S subunit. This chain is Small ribosomal subunit protein uS7c (rps7), found in Zamia furfuracea (Cardboard cycad).